Reading from the N-terminus, the 251-residue chain is Triosephosphate isomerase (251 aa).

Residue 9–11 (NWK) participates in substrate binding. His-95 serves as the catalytic Electrophile. The active-site Proton acceptor is the Glu-167. Substrate contacts are provided by residues Gly-173, Ser-213, and 234–235 (GG).

Belongs to the triosephosphate isomerase family. Homodimer.

The protein resides in the cytoplasm. The enzyme catalyses D-glyceraldehyde 3-phosphate = dihydroxyacetone phosphate. It functions in the pathway carbohydrate biosynthesis; gluconeogenesis. It participates in carbohydrate degradation; glycolysis; D-glyceraldehyde 3-phosphate from glycerone phosphate: step 1/1. Functionally, involved in the gluconeogenesis. Catalyzes stereospecifically the conversion of dihydroxyacetone phosphate (DHAP) to D-glyceraldehyde-3-phosphate (G3P). This chain is Triosephosphate isomerase, found in Fusobacterium nucleatum subsp. nucleatum (strain ATCC 25586 / DSM 15643 / BCRC 10681 / CIP 101130 / JCM 8532 / KCTC 2640 / LMG 13131 / VPI 4355).